The chain runs to 188 residues: Archaemetzincin (188 aa).

Residue His137 coordinates Zn(2+). Glu138 serves as the catalytic Proton acceptor. His141, His147, Cys148, Cys153, Cys172, and Cys175 together coordinate Zn(2+).

Belongs to the peptidase M54 family. As to quaternary structure, monomer. The cofactor is Zn(2+).

In terms of biological role, probable zinc metalloprotease whose natural substrate is unknown. The chain is Archaemetzincin from Pyrococcus abyssi (strain GE5 / Orsay).